The chain runs to 162 residues: Caveolin-2 (162 aa).

The Cytoplasmic segment spans residues 1 to 86; it reads MGLETEKADV…FEISKYIIYK (86 aa). Tyrosine 19 is subject to Phosphotyrosine; by SRC. Residues serine 20 and serine 23 each carry the phosphoserine modification. At tyrosine 27 the chain carries Phosphotyrosine; by SRC. The helical intramembrane region spans 87–107; the sequence is FLTVFLAIPLAFAAGILFATL. The Cytoplasmic portion of the chain corresponds to 108 to 162; that stretch reads SCLHIWITMPFVKTCLMVLPSVQTIWKSVTDVAIAPLCTSVGRSFSSVSLQLSHD.

It belongs to the caveolin family. As to quaternary structure, monomer or homodimer. Interacts with CAV1; the interaction forms a stable heterooligomeric complex that is required for targeting to lipid rafts and for caveolae formation. Tyrosine phosphorylated forms do not form heterooligomers with the Tyr-19-phosphorylated form existing as a monomer or dimer, and the Tyr-27-form as a monomer only. Interacts (tyrosine phosphorylated form) with the SH2 domain-containing proteins, RASA1, NCK1 and SRC. Interacts (tyrosine phosphorylated form) with INSR, the interaction (Tyr-27-phosphorylated form) is increased on insulin stimulation. Interacts (Tyr-19 phosphorylated form) with MAPK1 (phosphorylated form); the interaction, promoted by insulin, leads to nuclear location and MAPK1 activation. Interacts with STAT3; the interaction is increased on insulin-induced tyrosine phosphorylation leading to STAT activation. Phosphorylated on serine and tyrosine residues. CAV1 promotes phosphorylation on Ser-23 which then targets the complex to the plasma membrane, lipid rafts and caveolae. Phosphorylation on both Tyr-19 and Tyr-27 is required for insulin-induced 'Ser-727' phosphorylation of STAT3 and its activation. Phosphorylation on Tyr-19 is required for insulin-induced phosphorylation of MAPK1 and DNA binding of STAT3. Tyrosine phosphorylation is induced by both EGF and insulin.

Its subcellular location is the nucleus. It is found in the cytoplasm. The protein resides in the golgi apparatus membrane. The protein localises to the cell membrane. It localises to the membrane. Its subcellular location is the caveola. May act as a scaffolding protein within caveolar membranes. Interacts directly with G-protein alpha subunits and can functionally regulate their activity. Acts as an accessory protein in conjunction with CAV1 in targeting to lipid rafts and driving caveolae formation. Positive regulator of cellular mitogenesis of the MAPK signaling pathway. Required for the insulin-stimulated nuclear translocation and activation of MAPK1 and STAT3, and the subsequent regulation of cell cycle progression. The protein is Caveolin-2 (CAV2) of Dasypus novemcinctus (Nine-banded armadillo).